A 352-amino-acid polypeptide reads, in one-letter code: Protein-glutamate methylesterase/protein-glutamine glutaminase (352 aa).

A Response regulatory domain is found at Arg5–Glu122. The residue at position 56 (Asp56) is a 4-aspartylphosphate. The CheB-type methylesterase domain occupies Arg163–Thr352. Residues Ser171, His198, and Asp294 contribute to the active site.

Belongs to the CheB family. In terms of processing, phosphorylated by CheA. Phosphorylation of the N-terminal regulatory domain activates the methylesterase activity.

The protein resides in the cytoplasm. It catalyses the reaction [protein]-L-glutamate 5-O-methyl ester + H2O = L-glutamyl-[protein] + methanol + H(+). The enzyme catalyses L-glutaminyl-[protein] + H2O = L-glutamyl-[protein] + NH4(+). Its function is as follows. Involved in chemotaxis. Part of a chemotaxis signal transduction system that modulates chemotaxis in response to various stimuli. Catalyzes the demethylation of specific methylglutamate residues introduced into the chemoreceptors (methyl-accepting chemotaxis proteins or MCP) by CheR. Also mediates the irreversible deamidation of specific glutamine residues to glutamic acid. The chain is Protein-glutamate methylesterase/protein-glutamine glutaminase from Oceanobacillus iheyensis (strain DSM 14371 / CIP 107618 / JCM 11309 / KCTC 3954 / HTE831).